A 182-amino-acid polypeptide reads, in one-letter code: Protein SrpB (182 aa).

The next 4 membrane-spanning stretches (helical) occupy residues W11–N31, T43–G63, L73–L93, and I116–I136.

The protein belongs to the MgtC/SapB family.

The protein resides in the cell membrane. This chain is Protein SrpB (srpB), found in Synechococcus elongatus (strain ATCC 33912 / PCC 7942 / FACHB-805) (Anacystis nidulans R2).